Reading from the N-terminus, the 512-residue chain is Sorting nexin MVP1 (512 aa).

Residues 1–24 (MDLEADPWRVNSEENGNNISGSVW) are disordered. Positions 13–22 (EENGNNISGS) are enriched in low complexity. The PX domain maps to 130–248 (AEDIVSVEEI…LTFLTVPTDL (119 aa)). Residues R174, S176, K200, and R215 each coordinate a 1,2-diacyl-sn-glycero-3-phospho-(1D-myo-inositol-3-phosphate).

The protein belongs to the sorting nexin family.

Its subcellular location is the cytoplasm. The protein resides in the membrane. Its function is as follows. Required for vacuolar protein sorting. In Kluyveromyces lactis (strain ATCC 8585 / CBS 2359 / DSM 70799 / NBRC 1267 / NRRL Y-1140 / WM37) (Yeast), this protein is Sorting nexin MVP1 (MVP1).